Consider the following 362-residue polypeptide: Phosphoserine aminotransferase (362 aa).

Residues serine 9 and arginine 42 each coordinate L-glutamate. Residues 76–77 (GR), tryptophan 102, threonine 153, aspartate 174, and glutamine 197 contribute to the pyridoxal 5'-phosphate site. Lysine 198 bears the N6-(pyridoxal phosphate)lysine mark. 239–240 (NT) contacts pyridoxal 5'-phosphate.

This sequence belongs to the class-V pyridoxal-phosphate-dependent aminotransferase family. SerC subfamily. Homodimer. Pyridoxal 5'-phosphate serves as cofactor.

The protein localises to the cytoplasm. The enzyme catalyses O-phospho-L-serine + 2-oxoglutarate = 3-phosphooxypyruvate + L-glutamate. It carries out the reaction 4-(phosphooxy)-L-threonine + 2-oxoglutarate = (R)-3-hydroxy-2-oxo-4-phosphooxybutanoate + L-glutamate. It participates in amino-acid biosynthesis; L-serine biosynthesis; L-serine from 3-phospho-D-glycerate: step 2/3. Its pathway is cofactor biosynthesis; pyridoxine 5'-phosphate biosynthesis; pyridoxine 5'-phosphate from D-erythrose 4-phosphate: step 3/5. Functionally, catalyzes the reversible conversion of 3-phosphohydroxypyruvate to phosphoserine and of 3-hydroxy-2-oxo-4-phosphonooxybutanoate to phosphohydroxythreonine. The protein is Phosphoserine aminotransferase of Shigella boydii serotype 4 (strain Sb227).